We begin with the raw amino-acid sequence, 659 residues long: Chaperone protein DnaK (659 aa).

A Phosphothreonine; by autocatalysis modification is found at Thr-201. Residues 571–592 (RSALKEDAPTEKIKEASDELSR) are compositionally biased toward basic and acidic residues. Residues 571 to 659 (RSALKEDAPT…DVEIVDKPND (89 aa)) form a disordered region. The span at 600-613 (AMQSQSASAAANAQ) shows a compositional bias: low complexity.

The protein belongs to the heat shock protein 70 family.

Functionally, acts as a chaperone. The polypeptide is Chaperone protein DnaK (Chlamydia abortus (strain DSM 27085 / S26/3) (Chlamydophila abortus)).